Here is a 62-residue protein sequence, read N- to C-terminus: MSKCYITGKTTLFGNRRSHAMNATKRIWKANLQNVKIVDENGKVQKVKISARALKKLKLQRA.

Belongs to the bacterial ribosomal protein bL28 family.

The chain is Large ribosomal subunit protein bL28 from Onion yellows phytoplasma (strain OY-M).